The chain runs to 479 residues: GDP-fucose protein O-fucosyltransferase 3 (479 aa).

Residues 1–8 are Cytoplasmic-facing; the sequence is MVRIQRRK. A helical; Signal-anchor for type II membrane protein membrane pass occupies residues 9–31; sequence LLASCLCVTATVFLLVTLQVMVE. Residues 32–479 are Lumenal-facing; that stretch reads LGKFERKEFK…QEFWGLVFKD (448 aa). N-linked (GlcNAc...) asparagine glycans are attached at residues asparagine 110 and asparagine 168. Cysteine 389 and cysteine 392 are joined by a disulfide.

Belongs to the glycosyltransferase 10 family. Expressed in lung, digestive tract, gall bladder, placenta, kidney, uterus and brain. Not detected in spleen, heart, muscle, liver and pancreas.

The protein resides in the endoplasmic reticulum membrane. It is found in the golgi apparatus membrane. The protein localises to the golgi apparatus. It localises to the lysosome. It catalyses the reaction L-threonyl-[protein] + GDP-beta-L-fucose = 3-O-(alpha-L-fucosyl)-L-threonyl-[protein] + GDP + H(+). The enzyme catalyses L-seryl-[protein] + GDP-beta-L-fucose = 3-O-(alpha-L-fucosyl)-L-seryl-[protein] + GDP + H(+). Its pathway is protein modification; protein glycosylation. Protein O-fucosyltransferase that specifically catalyzes O-fucosylation of serine or threonine residues in EMI domains of target proteins, such as MMRN1, MMRN2 and EMID1. Attaches fucose through an O-glycosidic linkage. O-fucosylation of EMI domain-containing proteins may be required for facilitating protein folding and secretion. May also show alpha-(1,3)-fucosyltransferase activity toward the innermost N-acetyl glucosamine (GlcNAc) residue in biantennary N-glycan acceptors. However, this was tested with a library of synthetic substrates and this activity is unsure in vivo. May be involved in biosynthesis of Lewis X-carrying biantennary N-glycans that regulate neuron stem cell self-renewal during brain development. This chain is GDP-fucose protein O-fucosyltransferase 3, found in Homo sapiens (Human).